The primary structure comprises 1093 residues: MNAERNGSSTDTLDEYFEYEAEEFLVSLALLITEGRTPEHSIKGRTEGFHCPPAQSSQPPTTKHECSDKLAQCRQARRTRSEVMLLWKNNIPIMVEVMLLPDCCYSDEGPNTEGNDLNDPAIKQDALLLERWILEPVPRQSGDRFIEEKTLLLAVRSFVFFSQLSAWLSVSHGAVPRNILYRVSAADVDLQWTFSQTPTEHVFPVPNVSHNVALKVSVQSLPRQSNYPVLTCSIHTNLSYYEKQMKERKLHQHSESSTAELCGTSSPQRVCGKQAWTVIPEGLLNVKKTPEFTSSIRNLKLYPSTGLGSDFAASQSKIQCYNAAADSKTQSHETAVRTFKSLSLVDSRVSNGHCSHQSTGETNPLIGSLLQERQEVIARIAQHLIHCDPATSPVVAGRPFNMRETSTPTPKAYRSTYEDESLLRKGKETSPVPTVNLDNAIQEDGGEGKTRAIPEMPRLNPRAPVNHCGRPSAGEGNPLIDSLLQERRDVIARIAQHLIHCDPATSHVNGRPFKIHETSPVSSKIFRSTYEDENLLKKVKQPSSVSFAKSSFSLLEDSSKSKLKTPDTPISPRLDGESKASLKLQARRKLVLAKPSDAVQNAFHQTSNKTSHSFTNTHTSSSCVKENKSELLDKLEMMQSDYVQKDQITNRIKQCSNFSSVDEQICTNKLKERTVVSESNNTGTLNNLQIDKCRILEGTKKATVMQASDSLHKNELKCSDKDSKKPSIYEQNTQLISIENYLNKDHDNFKNKNRQDKTKAAHDENEEPVGLDFQSTSQKKPTEDGSMRCERLKNPDVQRAPSLKHTNTWRKHNFRSLDGTSTKAFHPRTGLPLLSSPVPQRKTHSGCFDLDSSLLQLKCLSARSPQQCINRESDPESHGKPFLSSSAPPVTSLSLLGNFEESVLNFRLDPLGIVEGFTAEVGASGVFCPTHMTLPVEVSFYSVSDDNAPSPYMGVITLESLGKRGYRVPPSGTIQVTLFNPNKTVVKMFVVIYDLREMPANHQTFLRQRTFSVPVRREIKRTVNKENSQQTEERLLRYLIHLRFQSSKSGKIYLHRDVRLLFSRKSMEVDSGAAYELKSYTESPTNPQFSPRC.

Residues 29-37 form a transactivation domain 1 (TAD1) region; it reads ALLITEGRT. Disordered regions lie at residues 396–479, 558–579, and 746–788; these read AGRP…GNPL, SSKS…GESK, and HDNF…GSMR. Basic and acidic residues predominate over residues 746–763; it reads HDNFKNKNRQDKTKAAHD. The interval 895 to 952 is required for macropage invasion; it reads LLGNFEESVLNFRLDPLGIVEGFTAEVGASGVFCPTHMTLPVEVSFYSVSDDNAPSPY. The interval 979 to 987 is transactivation domain 2 (TAD2); the sequence is FNPNKTVVK.

This sequence belongs to the ATOS family.

The protein localises to the nucleus. In terms of biological role, transcription regulator that syncronizes transcriptional and translational programs to promote macrophage invasion of tissues. In Gallus gallus (Chicken), this protein is Atos homolog protein A (ATOSA).